Here is a 155-residue protein sequence, read N- to C-terminus: Ribosomal RNA large subunit methyltransferase H (155 aa).

Residues L72, G103, and 122–127 contribute to the S-adenosyl-L-methionine site; that span reads LSALTL.

The protein belongs to the RNA methyltransferase RlmH family. As to quaternary structure, homodimer.

The protein resides in the cytoplasm. The enzyme catalyses pseudouridine(1915) in 23S rRNA + S-adenosyl-L-methionine = N(3)-methylpseudouridine(1915) in 23S rRNA + S-adenosyl-L-homocysteine + H(+). Functionally, specifically methylates the pseudouridine at position 1915 (m3Psi1915) in 23S rRNA. This Salmonella choleraesuis (strain SC-B67) protein is Ribosomal RNA large subunit methyltransferase H.